The following is a 514-amino-acid chain: ATP synthase subunit alpha (514 aa).

170–177 (GDRQTGKT) contacts ATP.

Belongs to the ATPase alpha/beta chains family. F-type ATPases have 2 components, CF(1) - the catalytic core - and CF(0) - the membrane proton channel. CF(1) has five subunits: alpha(3), beta(3), gamma(1), delta(1), epsilon(1). CF(0) has three main subunits: a(1), b(2) and c(9-12). The alpha and beta chains form an alternating ring which encloses part of the gamma chain. CF(1) is attached to CF(0) by a central stalk formed by the gamma and epsilon chains, while a peripheral stalk is formed by the delta and b chains.

Its subcellular location is the cell inner membrane. The enzyme catalyses ATP + H2O + 4 H(+)(in) = ADP + phosphate + 5 H(+)(out). In terms of biological role, produces ATP from ADP in the presence of a proton gradient across the membrane. The alpha chain is a regulatory subunit. In Acidithiobacillus ferridurans, this protein is ATP synthase subunit alpha.